The sequence spans 737 residues: Glycogen [starch] synthase, muscle (737 aa).

Serine 8 bears the Phosphoserine; by AMPK and PKA mark. Serine 11 is subject to Phosphoserine. Lysine 39 is a UDP binding site. Histidine 205 and arginine 211 together coordinate UDP-alpha-D-glucose. Alpha-D-glucose 6-phosphate is bound by residues histidine 291, glutamate 292, glutamine 294, histidine 297, and lysine 301. Residue arginine 331 coordinates UDP. Residue arginine 331 coordinates UDP-alpha-D-glucose. Phosphoserine is present on serine 412. Histidine 501 lines the alpha-D-glucose 6-phosphate pocket. 3 residues coordinate UDP-alpha-D-glucose: glutamate 510, tryptophan 512, and glycine 513. Position 515 (threonine 515) interacts with UDP. Positions 582 and 586 each coordinate alpha-D-glucose 6-phosphate. A disordered region spans residues tyrosine 634–asparagine 737. Serine 641 carries the post-translational modification Phosphoserine; by DYRK2, GSK3-alpha, GSK3-beta and PASK. 2 positions are modified to phosphoserine; by GSK3-alpha and GSK3-beta: serine 645 and serine 649. At serine 652 the chain carries Phosphoserine. The residue at position 653 (serine 653) is a Phosphoserine; by GSK3-alpha and GSK3-beta. Position 657 is a phosphoserine; by CK2 (serine 657). Residues glutamate 658–alanine 681 are compositionally biased toward acidic residues. Serine 672 carries the phosphoserine modification. The span at alanine 682–arginine 695 shows a compositional bias: basic and acidic residues. Serine 698 is subject to Phosphoserine. The segment covering serine 698–alanine 714 has biased composition (polar residues). A Phosphothreonine modification is found at threonine 700. Serine 710 is subject to Phosphoserine. Residues threonine 715 to asparagine 737 are compositionally biased toward low complexity. Phosphothreonine is present on threonine 721. Phosphoserine is present on residues serine 727 and serine 731.

This sequence belongs to the glycosyltransferase 3 family. As to quaternary structure, part of the GYS1-GYG1 complex, a heterooctamer composed of a tetramer of GYS1 and 2 dimers of GYG1, where each GYS1 protomer binds to one GYG1 subunit (via GYG1 C-terminus); the GYS1 tetramer may dissociate from GYG1 dimers to continue glycogen polymerization on its own. Post-translationally, phosphorylation at Ser-8 by AMPK inactivates the enzyme activity. Primed phosphorylation at Ser-657 (site 5) by CSNK2A1 and CSNK2A2 is required for inhibitory phosphorylation at Ser-641 (site 3a), Ser-645 (site 3b), Ser-649 (site 3c) and Ser-653 (site 4) by GSK3A an GSK3B. Phosphorylated at Ser-641 by PASK, leading to inactivation; phosphorylation by PASK is inhibited by glycogen. Phosphorylated at Ser-641 by DYRK2, leading to inactivation. Dephosphorylation at Ser-641 and Ser-645 by PP1 activates the enzyme.

It catalyses the reaction [(1-&gt;4)-alpha-D-glucosyl](n) + UDP-alpha-D-glucose = [(1-&gt;4)-alpha-D-glucosyl](n+1) + UDP + H(+). Its pathway is glycan biosynthesis; glycogen biosynthesis. Allosteric activation by glucose-6-phosphate. Phosphorylation reduces the activity towards UDP-glucose. When in the non-phosphorylated state, glycogen synthase does not require glucose-6-phosphate as an allosteric activator; when phosphorylated it does. Its function is as follows. Glycogen synthase participates in the glycogen biosynthetic process along with glycogenin and glycogen branching enzyme. Extends the primer composed of a few glucose units formed by glycogenin by adding new glucose units to it. In this context, glycogen synthase transfers the glycosyl residue from UDP-Glc to the non-reducing end of alpha-1,4-glucan. The protein is Glycogen [starch] synthase, muscle (GYS1) of Macaca mulatta (Rhesus macaque).